Here is a 238-residue protein sequence, read N- to C-terminus: tRNA (guanine-N(7)-)-methyltransferase (238 aa).

S-adenosyl-L-methionine-binding residues include Glu68, Glu93, Asp120, and Asp143. The active site involves Asp143. Residues Lys147, Asp179, and 216 to 219 (TKFE) contribute to the substrate site.

Belongs to the class I-like SAM-binding methyltransferase superfamily. TrmB family.

The enzyme catalyses guanosine(46) in tRNA + S-adenosyl-L-methionine = N(7)-methylguanosine(46) in tRNA + S-adenosyl-L-homocysteine. The protein operates within tRNA modification; N(7)-methylguanine-tRNA biosynthesis. Its function is as follows. Catalyzes the formation of N(7)-methylguanine at position 46 (m7G46) in tRNA. This is tRNA (guanine-N(7)-)-methyltransferase from Aliivibrio salmonicida (strain LFI1238) (Vibrio salmonicida (strain LFI1238)).